Here is a 235-residue protein sequence, read N- to C-terminus: MMNQMGMMMQQQGVGVPGGPGGVGGVGMPGPGGVGVAPGMMQSPQMQQAQQQQVQQQQVQQQQVQQQQVQQQQQQVQQQQQQQQQHSQSAQQQAQQTEKVDNISKVKVLVGPLRDALSTTIKTAAQLIQQNTLADAGSKTVDLNNAPRFDKHLEEFYSICDQIELNLKTTKLCMQQCTSSQQYLPIPVATSQPPLPETNALTYNQYLEVVKLQIGYAKDIHDTLICAAQNISPSE.

Low complexity predominate over residues 1–14; that stretch reads MMNQMGMMMQQQGV. The tract at residues 1–54 is disordered; that stretch reads MMNQMGMMMQQQGVGVPGGPGGVGGVGMPGPGGVGVAPGMMQSPQMQQAQQQQV. Residues 15-36 are compositionally biased toward gly residues; the sequence is GVPGGPGGVGGVGMPGPGGVGV. Positions 37-54 are enriched in low complexity; sequence APGMMQSPQMQQAQQQQV.

This sequence belongs to the Mediator complex subunit 29 family. As to quaternary structure, component of the Mediator complex.

It localises to the nucleus. Its function is as follows. Component of the Mediator complex, a coactivator involved in the regulated transcription of nearly all RNA polymerase II-dependent genes. Mediator functions as a bridge to convey information from gene-specific regulatory proteins to the basal RNA polymerase II transcription machinery. Mediator is recruited to promoters by direct interactions with regulatory proteins and serves as a scaffold for the assembly of a functional preinitiation complex with RNA polymerase II and the general transcription factors. The protein is Mediator of RNA polymerase II transcription subunit 29 (ix) of Anopheles gambiae (African malaria mosquito).